We begin with the raw amino-acid sequence, 203 residues long: GTP cyclohydrolase-2 (203 aa).

49–53 (RIHSE) lines the GTP pocket. Zn(2+) contacts are provided by cysteine 54, cysteine 65, and cysteine 67. Residues glutamine 70, 92 to 94 (EGR), and threonine 114 contribute to the GTP site. Aspartate 126 acts as the Proton acceptor in catalysis. Residue arginine 128 is the Nucleophile of the active site. GTP is bound by residues threonine 149 and lysine 154.

Belongs to the GTP cyclohydrolase II family. Zn(2+) is required as a cofactor.

It carries out the reaction GTP + 4 H2O = 2,5-diamino-6-hydroxy-4-(5-phosphoribosylamino)-pyrimidine + formate + 2 phosphate + 3 H(+). It participates in cofactor biosynthesis; riboflavin biosynthesis; 5-amino-6-(D-ribitylamino)uracil from GTP: step 1/4. Functionally, catalyzes the conversion of GTP to 2,5-diamino-6-ribosylamino-4(3H)-pyrimidinone 5'-phosphate (DARP), formate and pyrophosphate. The protein is GTP cyclohydrolase-2 of Shewanella sp. (strain ANA-3).